Consider the following 434-residue polypeptide: ATP phosphoribosyltransferase regulatory subunit (434 aa).

It belongs to the class-II aminoacyl-tRNA synthetase family. HisZ subfamily. As to quaternary structure, heteromultimer composed of HisG and HisZ subunits.

Its subcellular location is the cytoplasm. It participates in amino-acid biosynthesis; L-histidine biosynthesis; L-histidine from 5-phospho-alpha-D-ribose 1-diphosphate: step 1/9. Its function is as follows. Required for the first step of histidine biosynthesis. May allow the feedback regulation of ATP phosphoribosyltransferase activity by histidine. This chain is ATP phosphoribosyltransferase regulatory subunit, found in Geobacter metallireducens (strain ATCC 53774 / DSM 7210 / GS-15).